Consider the following 302-residue polypeptide: N-acetylmuramic acid 6-phosphate etherase (302 aa).

Positions 58 to 221 (IGKAFLNGGR…STGAMVKTGK (164 aa)) constitute an SIS domain. The active-site Proton donor is the glutamate 86. The active site involves glutamate 117.

The protein belongs to the GCKR-like family. MurNAc-6-P etherase subfamily. Homodimer.

It carries out the reaction N-acetyl-D-muramate 6-phosphate + H2O = N-acetyl-D-glucosamine 6-phosphate + (R)-lactate. It functions in the pathway amino-sugar metabolism; N-acetylmuramate degradation. Functionally, specifically catalyzes the cleavage of the D-lactyl ether substituent of MurNAc 6-phosphate, producing GlcNAc 6-phosphate and D-lactate. The polypeptide is N-acetylmuramic acid 6-phosphate etherase (Clostridium botulinum (strain Loch Maree / Type A3)).